We begin with the raw amino-acid sequence, 185 residues long: Protein-lysine palmitoyltransferase CyaC (185 aa).

Catalysis depends on residues H33 and D102.

This sequence belongs to the RTX toxin acyltransferase family. Homodimer.

The protein localises to the cytoplasm. The catalysed reaction is hexadecanoyl-[ACP] + L-lysyl-[protein] = N(6)-hexadecanoyl-L-lysyl-[protein] + holo-[ACP] + H(+). The enzyme catalyses (9Z)-hexadecenoyl-[ACP] + L-lysyl-[protein] = N(6)-[(9Z)-hexadecenoyl]-L-lysyl-[protein] + holo-[ACP] + H(+). Functionally, protein-lysine palmitoyltransferase that catalyzes palmitoylation of the protoxin (CyaA) at two internal lysine residues, thereby converting it to the active toxin. This chain is Protein-lysine palmitoyltransferase CyaC, found in Bordetella bronchiseptica (strain ATCC BAA-588 / NCTC 13252 / RB50) (Alcaligenes bronchisepticus).